The primary structure comprises 347 residues: Fused nickel transport protein NikMN (347 aa).

9 helical membrane-spanning segments follow: residues 6–26, 40–60, 73–93, 96–116, 140–160, 185–205, 236–256, 273–293, and 319–339; these read GYLS…FWYV, LPLV…NLPI, IAAV…ALLI, IFFG…MAVV, VIMA…LAAV, VAVP…EFIV, LWAG…AAGT, AAMA…GGFA, and VLSA…SAGL.

The protein belongs to the CbiM family. NikM subfamily. In terms of assembly, forms an energy-coupling factor (ECF) transporter complex composed of an ATP-binding protein (A component, NikO), a transmembrane protein (T component, NikQ) and a fused possible substrate-capture protein (S component, NikMN) of unknown stoichimetry.

It localises to the cell inner membrane. Its function is as follows. Part of the energy-coupling factor (ECF) transporter complex NikMNQO involved in nickel import. The complex confers nickel uptake upon expression in E.coli; can also transport cobalt with a very low affinity. This chain is Fused nickel transport protein NikMN (nikMN), found in Rhodobacter capsulatus (strain ATCC BAA-309 / NBRC 16581 / SB1003).